Here is a 327-residue protein sequence, read N- to C-terminus: Vacuolar protein sorting-associated protein 26A (327 aa).

A disordered region spans residues 306-327; sequence RTNFHQRFESPDSQASAEQPEM. A Phosphoserine modification is found at Ser315. Polar residues predominate over residues 316 to 327; it reads PDSQASAEQPEM.

Belongs to the VPS26 family. As to quaternary structure, component of the heterotrimeric retromer cargo-selective complex (CSC), also described as vacuolar protein sorting subcomplex (VPS), formed by VPS26 (VPS26A or VPS26B), VPS29 and VPS35. The CSC has a highly elongated structure with VPS26 and VPS29 binding independently at opposite distal ends of VPS35 as central platform. The CSC is believed to associate with variable sorting nexins to form functionally distinct retromer complex variants. The originally described retromer complex (also called SNX-BAR retromer) is a pentamer containing the CSC and a heterodimeric membrane-deforming subcomplex formed between SNX1 or SNX2 and SNX5 or SNX6 (also called SNX-BAR subcomplex); the respective CSC and SNX-BAR subcomplexes associate with low affinity. The CSC associates with SNX3 to form a SNX3-retromer complex. The CSC associates with SNX27, the WASH complex and the SNX-BAR subcomplex to form the SNX27-retromer complex. Interacts with VPS29, VPS35, SNX27. Interacts with SNX1, SNX2, SNX5, SNX6, SNX3, RAB7A, ECPAS, EHD1, WASHC5, SORL1.

The protein localises to the cytoplasm. Its subcellular location is the endosome membrane. The protein resides in the early endosome. Its function is as follows. Acts as a component of the retromer cargo-selective complex (CSC). The CSC is believed to be the core functional component of retromer or respective retromer complex variants acting to prevent missorting of selected transmembrane cargo proteins into the lysosomal degradation pathway. The recruitment of the CSC to the endosomal membrane involves RAB7A and SNX3. The SNX-BAR retromer mediates retrograde transport of cargo proteins from endosomes to the trans-Golgi network (TGN) and is involved in endosome-to-plasma membrane transport for cargo protein recycling. The SNX3-retromer mediates the retrograde endosome-to-TGN transport of WLS distinct from the SNX-BAR retromer pathway. The SNX27-retromer is believed to be involved in endosome-to-plasma membrane trafficking and recycling of a broad spectrum of cargo proteins. The CSC complex seems to act as recruitment hub for other proteins, such as the WASH complex and TBC1D5. Required for retrograde transport of lysosomal enzyme receptor IGF2R. Required to regulate transcytosis of the polymeric immunoglobulin receptor (pIgR-pIgA). Required for the endosomal localization of WASHC2 (indicative for the WASH complex). Required for the endosomal localization of TBC1D5. Mediates retromer cargo recognition of SORL1 and is involved in trafficking of SORL1 implicated in sorting and processing of APP. Involved in retromer-independent lysosomal sorting of F2R. Involved in recycling of ADRB2. Acts redundantly with VSP26B in SNX-27 mediated endocytic recycling of SLC2A1/GLUT1. Enhances the affinity of SNX27 for PDZ-binding motifs in cargo proteins. This is Vacuolar protein sorting-associated protein 26A (Vps26a) from Mus musculus (Mouse).